Consider the following 1062-residue polypeptide: Probable sucrose-phosphate synthase 3 (1062 aa).

Over residues 113–122 (EREQGRRDAT) the composition is skewed to basic and acidic residues. The tract at residues 113-141 (EREQGRRDATEDLSEDLSEGEKGDGLGEI) is disordered. Phosphoserine occurs at positions 126, 130, and 156. The interval 715 to 735 (MDGDKPSLNGSLEPNSADPVK) is disordered.

This sequence belongs to the glycosyltransferase 1 family. As to quaternary structure, homodimer or homotetramer.

The enzyme catalyses beta-D-fructose 6-phosphate + UDP-alpha-D-glucose = sucrose 6(F)-phosphate + UDP + H(+). Its pathway is glycan biosynthesis; sucrose biosynthesis; sucrose from D-fructose 6-phosphate and UDP-alpha-D-glucose: step 1/2. With respect to regulation, activity is regulated by phosphorylation and moderated by concentration of metabolites and light. Plays a role in photosynthetic sucrose synthesis by catalyzing the rate-limiting step of sucrose biosynthesis from UDP-glucose and fructose- 6-phosphate. Involved in the regulation of carbon partitioning in the leaves of plants. May regulate the synthesis of sucrose and therefore play a major role as a limiting factor in the export of photoassimilates out of the leaf. Plays a role for sucrose availability that is essential for plant growth and fiber elongation. This Arabidopsis thaliana (Mouse-ear cress) protein is Probable sucrose-phosphate synthase 3 (SPS3).